The primary structure comprises 66 residues: DNA-directed RNA polymerase subunit omega (66 aa).

It belongs to the RNA polymerase subunit omega family. As to quaternary structure, the RNAP catalytic core consists of 2 alpha, 1 beta, 1 beta' and 1 omega subunit. When a sigma factor is associated with the core the holoenzyme is formed, which can initiate transcription.

The enzyme catalyses RNA(n) + a ribonucleoside 5'-triphosphate = RNA(n+1) + diphosphate. In terms of biological role, promotes RNA polymerase assembly. Latches the N- and C-terminal regions of the beta' subunit thereby facilitating its interaction with the beta and alpha subunits. This is DNA-directed RNA polymerase subunit omega from Clostridium botulinum (strain Eklund 17B / Type B).